A 449-amino-acid chain; its full sequence is Probable glycosyltransferase 5 (449 aa).

Positions 1 to 14 (MMEKHGGKVTSDRR) are enriched in basic and acidic residues. Residues 1–24 (MMEKHGGKVTSDRRAGRRQHGQRC) are disordered. Residues 1 to 28 (MMEKHGGKVTSDRRAGRRQHGQRCSASD) lie on the Cytoplasmic side of the membrane. Residues 29–49 (AAPLVVVVILIVGALFLILGP) traverse the membrane as a helical; Signal-anchor for type II membrane protein segment. At 50 to 449 (TGSSSFTVPR…HPTFRAARPT (400 aa)) the chain is on the lumenal side. Residues 74–109 (APPPPPPPAQMQAGANASSEEDSGLPPPRQLTDPPY) are disordered. N-linked (GlcNAc...) asparagine glycans are attached at residues Asn89, Asn413, and Asn422.

The protein belongs to the glycosyltransferase 34 family.

The protein resides in the golgi apparatus membrane. In terms of biological role, probable glycosyltransferase that may be involved in the biosynthesis of xyloglucan. The chain is Probable glycosyltransferase 5 from Oryza sativa subsp. indica (Rice).